A 198-amino-acid chain; its full sequence is Syndecan-4 (198 aa).

Residues 1–18 (MAPARLFALLLFFVGGVA) form the signal peptide. Residues 19–145 (ESIRETEVID…QGSNIFERTE (127 aa)) lie on the Extracellular side of the membrane. O-linked (Xyl...) (glycosaminoglycan) serine glycans are attached at residues serine 39, serine 61, and serine 63. Serine 95 carries O-linked (Xyl...) (chondroitin sulfate) serine glycosylation. The helical transmembrane segment at 146–170 (VLAALIVGGIVGILFAVFLILLLMY) threads the bilayer. At 171–198 (RMKKKDEGSYDLGKKPIYKKAPTNEFYA) the chain is on the cytoplasmic side.

The protein belongs to the syndecan proteoglycan family. In terms of assembly, homodimer. Interacts (via its cytoplasmic domain) with GIPC (via its PDZ domain). Interacts (via its cytoplasmic domain) with NUDT16L1. Interacts with CDCP1 and SDCBP. Interacts with DNM2; this interaction is markedly enhanced at focal ahesion site upon induction of focal adhesions and stress-fiber formation. In terms of processing, shedding is enhanced by a number of factors such as heparanase, thrombin or EGF. Also by stress and wound healing. PMA-mediated shedding is inhibited by TIMP3. O-glycosylated; contains both chondroitin sulfate and heparan sulfate. Ser-39, Ser-61 and Ser-63 can all be modified by either chondroitin sulfate or heparan sulfate, and the protein exists in forms that contain only chondroitin sulfate, only heparan sulfate and both chondroitin sulfate and heparan sulfate. In terms of tissue distribution, detected in fibroblasts (at protein level). Also expressed in epithelial cells.

Its subcellular location is the membrane. The protein resides in the secreted. In terms of biological role, cell surface proteoglycan which regulates exosome biogenesis in concert with SDCBP and PDCD6IP. This is Syndecan-4 from Homo sapiens (Human).